A 264-amino-acid polypeptide reads, in one-letter code: MDTRPIGFLDSGVGGLTVVCELIRQLPHEKIVYIGDSARAPYGPRPKKQIKEYTWELVNFLLTQNVKMIVFACNTATAVAWEEVKATLDIPVLGVVLPGASAAIKSTTKGQVGVIGTPMTVASDIYRKKIQLLAPSVQVRSLACPKFVPIVESNEMCSSIAKKIVYDSLSPLVGKIDTLVLGCTHYPLLRPIIQNVMGPSVKLIDSGAECVRDISVLLNYFDINGNYHQKAVEHRFFTTANPEIFQEIASIWLKQKINVEHVTL.

Substrate contacts are provided by residues 10-11 and 42-43; these read DS and YG. C73 serves as the catalytic Proton donor/acceptor. 74 to 75 serves as a coordination point for substrate; the sequence is NT. The active-site Proton donor/acceptor is the C183. Substrate is bound at residue 184-185; it reads TH.

It belongs to the aspartate/glutamate racemases family.

The enzyme catalyses L-glutamate = D-glutamate. It functions in the pathway cell wall biogenesis; peptidoglycan biosynthesis. Its function is as follows. Provides the (R)-glutamate required for cell wall biosynthesis. This is Glutamate racemase from Streptococcus pyogenes serotype M6 (strain ATCC BAA-946 / MGAS10394).